The primary structure comprises 328 residues: Lactamase-like protein nscB (328 aa).

The Zn(2+) site is built by His-97, His-99, Asp-101, and His-102. Residue Asp-101 is the Proton donor/acceptor of the active site.

Belongs to the metallo-beta-lactamase superfamily. Zn(2+) serves as cofactor.

It participates in secondary metabolite biosynthesis. Functionally, lactamase-like protein; part of the gene cluster that mediates the biosynthesis of neosartoricin, a prenylated anthracenone that exhibits T-cell antiproliferative activity, suggestive of a physiological role as an immunosuppressive agent. The non-reducing polyketide synthase nscA probably synthesizes and cyclizes the decaketide backbone. The hydrolase nscB then mediates the product release through hydrolysis followed by spontaneous decarboxylation. The prenyltransferase nscD catalyzes the addition of the dimethylallyl group to the aromatic C5. The FAD-dependent monooxygenase nscC is then responsible for the stereospecific hydroxylation at C2. There is no gene encoding O-acetyltransferase in the nsc gene cluster; thus, the last step of 2-O-acetylation leading to neosartoricin may be catalyzed by an unidentified O-acetyltransferase. This chain is Lactamase-like protein nscB, found in Neosartorya fischeri (strain ATCC 1020 / DSM 3700 / CBS 544.65 / FGSC A1164 / JCM 1740 / NRRL 181 / WB 181) (Aspergillus fischerianus).